The following is a 224-amino-acid chain: Thymidylate kinase (224 aa).

7–14 (GIEGSGKS) is an ATP binding site.

This sequence belongs to the thymidylate kinase family.

The catalysed reaction is dTMP + ATP = dTDP + ADP. In terms of biological role, phosphorylation of dTMP to form dTDP in both de novo and salvage pathways of dTTP synthesis. The polypeptide is Thymidylate kinase (Nitratidesulfovibrio vulgaris (strain DP4) (Desulfovibrio vulgaris)).